Here is a 220-residue protein sequence, read N- to C-terminus: Cytidylate kinase (220 aa).

10–18 (GPAGAGKST) is a binding site for ATP.

Belongs to the cytidylate kinase family. Type 1 subfamily.

It localises to the cytoplasm. The enzyme catalyses CMP + ATP = CDP + ADP. The catalysed reaction is dCMP + ATP = dCDP + ADP. The sequence is that of Cytidylate kinase from Alkaliphilus metalliredigens (strain QYMF).